An 822-amino-acid polypeptide reads, in one-letter code: Aminopeptidase O (822 aa).

His480 serves as a coordination point for Zn(2+). The active-site Proton acceptor is Glu481. His484 and Glu503 together coordinate Zn(2+). The Nucleolar localization signal signature appears at 692 to 702 (RRPGKRQRRKR).

This sequence belongs to the peptidase M1 family. It depends on Zn(2+) as a cofactor.

The protein localises to the nucleus. Its subcellular location is the nucleolus. Its function is as follows. Aminopeptidase which catalyzes the hydrolysis of amino acid residues from the N-terminus of peptide or protein substrates. The sequence is that of Aminopeptidase O (Aopep) from Rattus norvegicus (Rat).